Consider the following 310-residue polypeptide: Olfactory receptor 5P54 (310 aa).

The Extracellular segment spans residues 1–25 (MNGGNHTSMTELFILGPTEDPTFCI). The N-linked (GlcNAc...) asparagine glycan is linked to Asn5. The helical transmembrane segment at 26-46 (AFFVIFLGVYMVTLVGNISII) threads the bilayer. Residues 47-54 (TLIRISSQ) are Cytoplasmic-facing. Residues 55–75 (LHTPVYLFLNHLAFVDILYST) form a helical membrane-spanning segment. Residues 76–99 (LVSVIMLMELLEHELALPVAACAA) are Extracellular-facing. Cys97 and Cys189 form a disulfide bridge. A helical transmembrane segment spans residues 100-120 (ELCITVLFGSSECFLLAAMAY). Residues 121–133 (DCYVAICSPLLYS) lie on the Cytoplasmic side of the membrane. The chain crosses the membrane as a helical span at residues 134-154 (TLMSSRVCFLLLGMSYVGGCM). The Extracellular portion of the chain corresponds to 155 to 196 (NGWIFTGCLLNLSFYGPYQIDHFFCDFSPLLKLSCSDVSIIG). The N-linked (GlcNAc...) asparagine glycan is linked to Asn165. Residues 197-217 (IIPSISSGSIIVVTVLVIAVF) traverse the membrane as a helical segment. Over 218-237 (YICILMTILKMHSTDGCHKA) the chain is Cytoplasmic. Residues 238–258 (FSTCNSYLTAVTLYYGTITFI) form a helical membrane-spanning segment. Residues 259–271 (YVMPKSNYSTEKN) are Extracellular-facing. Asn265 carries N-linked (GlcNAc...) asparagine glycosylation. Residues 272–292 (KVLSEFYTVVIPMLNHLIYSL) traverse the membrane as a helical segment. Over 293 to 310 (KNRDVKDALRKAIVRVYT) the chain is Cytoplasmic.

It belongs to the G-protein coupled receptor 1 family.

It localises to the cell membrane. Potential odorant receptor. The sequence is that of Olfactory receptor 5P54 from Mus musculus (Mouse).